A 73-amino-acid chain; its full sequence is Large ribosomal subunit protein eL20 (73 aa).

This sequence belongs to the eukaryotic ribosomal protein eL20 family. Part of the 50S ribosomal subunit. Binds 23S rRNA.

The protein is Large ribosomal subunit protein eL20 of Methanococcus aeolicus (strain ATCC BAA-1280 / DSM 17508 / OCM 812 / Nankai-3).